The sequence spans 499 residues: MSIGEVSDSAGHLASLVLPIEVAPIAPLIPEPPATAEHIFTLRHVYHHGTHKHPSLHRKHDVTPSNADVWLAAEDGYEAERIGPLRARSNALRIQRLVDRRPSVVDPMVAQSRQQGFVSVLSPSAWTVDDVAGPDVTDKGTVLTMALMAANAYVEGPGKADWQDVGAPFNRSLDFGWEGDGLRGHVFADENNSTIVIGLKGTSPAVFDGDGTTTNDKVNDNLFFSCCCAQQGPWTWHQVCDCATGTYTCNNTCVTQALREENRYYQAARELYANVTEVYPDSHVWIAGHSLGGAVSSFLGLTYGVPVVTFQAVPDALPAGRLGLPVPPGADPNAPQSRDYTGAFHFGHTADPIYMGSCNGATASCSFAGYALESACHTGHECVYDTVGDKGWRVGIGTHKIVAVIRDVILKYDTVPECKFTPECRDCGNWKMYESNGTETTTTSSAPTTTSISRTRTETCKTPHLKSQQQRQRPRPRPLHALPQWEGGNPDSPERNEEM.

Topologically, residues 1-9 (MSIGEVSDS) are cytoplasmic. A helical; Signal-anchor for type II membrane protein transmembrane segment spans residues 10–30 (AGHLASLVLPIEVAPIAPLIP). Over 31 to 499 (EPPATAEHIF…PDSPERNEEM (469 aa)) the chain is Lumenal. N170, N191, N192, N250, and N274 each carry an N-linked (GlcNAc...) asparagine glycan. The active-site Charge relay system is S290. Residue N436 is glycosylated (N-linked (GlcNAc...) asparagine). Positions 436-499 (NGTETTTTSS…PDSPERNEEM (64 aa)) are disordered. A compositionally biased stretch (low complexity) spans 438–454 (TETTTTSSAPTTTSISR).

The protein belongs to the AB hydrolase superfamily. Lipase family. As to quaternary structure, binds to both phosphatidylinositol (PI) and phosphatidylinositol 3,5-bisphosphate (PIP2).

The protein localises to the endosome. The protein resides in the multivesicular body membrane. It localises to the prevacuolar compartment membrane. It carries out the reaction a triacylglycerol + H2O = a diacylglycerol + a fatty acid + H(+). Lipase which is essential for lysis of subvacuolar cytoplasm to vacuole targeted bodies and intravacuolar autophagic bodies. Involved in the lysis of intravacuolar multivesicular body (MVB) vesicles. The intravacuolar membrane disintegration by atg15 is critical to life span extension. This chain is Putative lipase atg15 (atg15), found in Chaetomium globosum (strain ATCC 6205 / CBS 148.51 / DSM 1962 / NBRC 6347 / NRRL 1970) (Soil fungus).